A 213-amino-acid polypeptide reads, in one-letter code: MSFNIDEWEPKTKMGKLVKEGTITDIDEIFEKGLPIMELEIVDALVPDLEEEVMDVNLVQRMHKSGRKVNFRVIVAVGNKNGYVGLGQGKAKEVGPAIRKAVDNAKYNLIKVRRGCGDWGCVCGKEHTVPFKVQGKASSVSVSLMPAPAGVGLVVGDVGKTILNLAGIKDVWSQSFGQTQTTVNFANAIFDALKTLSAVKASEADLKKMGVKY.

One can recognise an S5 DRBM domain in the interval 49–112 (LEEEVMDVNL…DNAKYNLIKV (64 aa)).

The protein belongs to the universal ribosomal protein uS5 family. In terms of assembly, part of the 30S ribosomal subunit. Contacts protein S4.

In terms of biological role, with S4 and S12 plays an important role in translational accuracy. This chain is Small ribosomal subunit protein uS5, found in Methanobrevibacter smithii (strain ATCC 35061 / DSM 861 / OCM 144 / PS).